We begin with the raw amino-acid sequence, 208 residues long: Protein-L-isoaspartate O-methyltransferase (208 aa).

Residue S59 is part of the active site.

This sequence belongs to the methyltransferase superfamily. L-isoaspartyl/D-aspartyl protein methyltransferase family.

It localises to the cytoplasm. It carries out the reaction [protein]-L-isoaspartate + S-adenosyl-L-methionine = [protein]-L-isoaspartate alpha-methyl ester + S-adenosyl-L-homocysteine. Catalyzes the methyl esterification of L-isoaspartyl residues in peptides and proteins that result from spontaneous decomposition of normal L-aspartyl and L-asparaginyl residues. It plays a role in the repair and/or degradation of damaged proteins. The polypeptide is Protein-L-isoaspartate O-methyltransferase (Aliivibrio fischeri (strain MJ11) (Vibrio fischeri)).